The primary structure comprises 108 residues: Large ribosomal subunit protein eL32 (108 aa).

The span at 21–30 (RRPRGRTSKM) shows a compositional bias: basic residues. The tract at residues 21–44 (RRPRGRTSKMRRYEKGKPAMPAIG) is disordered.

It belongs to the eukaryotic ribosomal protein eL32 family.

In Methanothermobacter thermautotrophicus (strain ATCC 29096 / DSM 1053 / JCM 10044 / NBRC 100330 / Delta H) (Methanobacterium thermoautotrophicum), this protein is Large ribosomal subunit protein eL32 (rpl32e).